We begin with the raw amino-acid sequence, 126 residues long: Profilin-3 (126 aa).

The protein belongs to the profilin family. In terms of assembly, occurs in many kinds of cells as a complex with monomeric actin in a 1:1 ratio. In embryos, expression is specifically detected in body wall muscle cells. In adults, expression is localized to a striking dot-like fashion in body wall muscle.

It is found in the cytoplasm. Its subcellular location is the cytoskeleton. Its function is as follows. Binds to actin and affects the structure of the cytoskeleton. At high concentrations, profilin prevents the polymerization of actin, whereas it enhances it at low concentrations. By binding to PIP2, it inhibits the formation of IP3 and DG. Also binds to poly(L-proline) and phosphatidylinositol 4,5-bisphosphate micelles. The chain is Profilin-3 (pfn-3) from Caenorhabditis elegans.